Here is a 399-residue protein sequence, read N- to C-terminus: Bombesin receptor subtype-3 (399 aa).

Over 1–41 (MSQRQSQSPNQTLISITNDTETSSSVVSNDTTHKGWTGDNS) the chain is Extracellular. Asparagine 10, asparagine 18, and asparagine 29 each carry an N-linked (GlcNAc...) asparagine glycan. Residues 42–63 (PGIEALCAIYITYAGIISVGIL) form a helical membrane-spanning segment. Over 64-82 (GNAILIKVFFKTKSMQTVP) the chain is Cytoplasmic. The helical transmembrane segment at 83 to 103 (NIFITSLAFGDLLLLLTCVPV) threads the bilayer. The Extracellular segment spans residues 104-121 (DATHYLAEGWLFGKVGCK). Cysteine 120 and cysteine 203 are joined by a disulfide. The chain crosses the membrane as a helical span at residues 122–143 (VLSFIRLTSVGVSVFTLTILSA). Residues 144-163 (DRYKAVVKPLERQPPNAILK) lie on the Cytoplasmic side of the membrane. Residues 164-184 (TCAKAGGIWIVSMIFALPEAI) form a helical membrane-spanning segment. Over 185 to 220 (FSNVYTFQDPNRNVTFESCNSYPISERLLQEIHSLL) the chain is Extracellular. A helical transmembrane segment spans residues 221-241 (CFLVFYIIPLSIISVYYSLIA). Topologically, residues 242–272 (RTLYKSTLNIPTEEQSHARKQIESRKRIAKT) are cytoplasmic. A helical membrane pass occupies residues 273 to 293 (VLVLVALFALCWLPNHLLYLY). Over 294–313 (HSFTYESYANHSDVPFVIII) the chain is Extracellular. Residues 314-333 (FSRVLAFSNSCVNPFALYWL) form a helical membrane-spanning segment. Residues 334–399 (SKTFQQHFKA…SSAKKGEDKV (66 aa)) lie on the Cytoplasmic side of the membrane. Cysteine 347 carries S-palmitoyl cysteine lipidation.

This sequence belongs to the G-protein coupled receptor 1 family. As to quaternary structure, interacts with C6orf89.

The protein localises to the cell membrane. In terms of biological role, role in sperm cell division, maturation, or function. This receptor mediates its action by association with G proteins that activate a phosphatidylinositol-calcium second messenger system. This is Bombesin receptor subtype-3 (Brs3) from Mus musculus (Mouse).